The primary structure comprises 71 residues: UPF0346 protein Sez_1447 (71 aa).

This sequence belongs to the UPF0346 family.

In Streptococcus equi subsp. zooepidemicus (strain MGCS10565), this protein is UPF0346 protein Sez_1447.